A 120-amino-acid chain; its full sequence is Large ribosomal subunit protein uL22 (120 aa).

It belongs to the universal ribosomal protein uL22 family. Part of the 50S ribosomal subunit.

This protein binds specifically to 23S rRNA; its binding is stimulated by other ribosomal proteins, e.g. L4, L17, and L20. It is important during the early stages of 50S assembly. It makes multiple contacts with different domains of the 23S rRNA in the assembled 50S subunit and ribosome. Functionally, the globular domain of the protein is located near the polypeptide exit tunnel on the outside of the subunit, while an extended beta-hairpin is found that lines the wall of the exit tunnel in the center of the 70S ribosome. This chain is Large ribosomal subunit protein uL22, found in Corynebacterium urealyticum (strain ATCC 43042 / DSM 7109).